The primary structure comprises 697 residues: DNA ligase (697 aa).

NAD(+)-binding positions include 44–48, 93–94, and glutamate 123; these read DGEFD and SL. Catalysis depends on lysine 125, which acts as the N6-AMP-lysine intermediate. 4 residues coordinate NAD(+): arginine 146, glutamate 186, lysine 302, and lysine 326. The Zn(2+) site is built by cysteine 420, cysteine 423, cysteine 439, and cysteine 445. The region spanning 609–697 is the BRCT domain; it reads SIPRNLEGLS…GPDAVTDSGV (89 aa).

It belongs to the NAD-dependent DNA ligase family. LigA subfamily. Requires Mg(2+) as cofactor. It depends on Mn(2+) as a cofactor.

It carries out the reaction NAD(+) + (deoxyribonucleotide)n-3'-hydroxyl + 5'-phospho-(deoxyribonucleotide)m = (deoxyribonucleotide)n+m + AMP + beta-nicotinamide D-nucleotide.. In terms of biological role, DNA ligase that catalyzes the formation of phosphodiester linkages between 5'-phosphoryl and 3'-hydroxyl groups in double-stranded DNA using NAD as a coenzyme and as the energy source for the reaction. It is essential for DNA replication and repair of damaged DNA. This is DNA ligase from Rhodococcus opacus (strain B4).